A 404-amino-acid polypeptide reads, in one-letter code: Cysteine desulfurase IscS (404 aa).

Residues 75-76 (AT), asparagine 155, glutamine 183, and 203-205 (SAH) contribute to the pyridoxal 5'-phosphate site. Lysine 206 bears the N6-(pyridoxal phosphate)lysine mark. Threonine 243 provides a ligand contact to pyridoxal 5'-phosphate. The Cysteine persulfide intermediate role is filled by cysteine 328. Cysteine 328 contributes to the [2Fe-2S] cluster binding site.

Belongs to the class-V pyridoxal-phosphate-dependent aminotransferase family. NifS/IscS subfamily. Homodimer. Forms a heterotetramer with IscU, interacts with other sulfur acceptors. It depends on pyridoxal 5'-phosphate as a cofactor.

It is found in the cytoplasm. It carries out the reaction (sulfur carrier)-H + L-cysteine = (sulfur carrier)-SH + L-alanine. Its pathway is cofactor biosynthesis; iron-sulfur cluster biosynthesis. Its function is as follows. Master enzyme that delivers sulfur to a number of partners involved in Fe-S cluster assembly, tRNA modification or cofactor biosynthesis. Catalyzes the removal of elemental sulfur atoms from cysteine to produce alanine. Functions as a sulfur delivery protein for Fe-S cluster synthesis onto IscU, an Fe-S scaffold assembly protein, as well as other S acceptor proteins. In Vibrio vulnificus (strain YJ016), this protein is Cysteine desulfurase IscS.